Reading from the N-terminus, the 436-residue chain is F-box protein SKIP16 (436 aa).

One can recognise an F-box; degenerate domain in the interval 75–111 (RESFRMYPWNLVKRVRLCWDNLKQWLTLNFPEAKATL). The 142-residue stretch at 295–436 (VSVTNGVQVR…FPLELPDYIF (142 aa)) folds into the ApaG domain.

In terms of assembly, part of a SCF (ASK-cullin-F-box) protein ligase complex. Interacts with SKP1A/ASK1, SKP1B/ASK2, ASK4, ASK11 and ASK13.

The protein operates within protein modification; protein ubiquitination. Functionally, component of SCF(ASK-cullin-F-box) E3 ubiquitin ligase complexes, which may mediate the ubiquitination and subsequent proteasomal degradation of target proteins. In Arabidopsis thaliana (Mouse-ear cress), this protein is F-box protein SKIP16 (SKIP16).